Consider the following 74-residue polypeptide: Putative membrane protein insertion efficiency factor (74 aa).

This sequence belongs to the UPF0161 family.

Its subcellular location is the cell membrane. Could be involved in insertion of integral membrane proteins into the membrane. The sequence is that of Putative membrane protein insertion efficiency factor from Bacillus pumilus (strain SAFR-032).